The primary structure comprises 506 residues: Putative basic amino acid antiporter YfcC (506 aa).

13 helical membrane-spanning segments follow: residues 19–39 (LVII…VPVG), 107–127 (GTAV…GIVM), 148–168 (ILFI…FGMG), 171–191 (AVAF…DSIT), 208–228 (WMNP…VLSG), 231–251 (LRIV…MVYA), 287–307 (WLVL…VIVN), 310–330 (FIPE…IIGV), 352–372 (MMIA…LVGN), 398–418 (AVAA…VTSG), 419–439 (SGQA…VGVN), 442–462 (VTVL…PTSA), and 485–505 (LLGL…LMGY).

To H.influenzae HI_0594. This sequence to B.subtilis YcgA.

The protein localises to the cell inner membrane. Functionally, metabolomic profiling of different yfcC over-expression and deletion strains suggests that it may affect the glyoxylate shunt. This is Putative basic amino acid antiporter YfcC (yfcC) from Escherichia coli (strain K12).